Consider the following 319-residue polypeptide: Lambda-crystallin homolog (319 aa).

Position 2 is an N-acetylalanine (Ala2). The residue at position 3 (Ser3) is a Phosphoserine. Residues Val16–Ile17, Asp36, Glu97, and Lys102 contribute to the NAD(+) site. Phosphoserine is present on Ser111.

It belongs to the 3-hydroxyacyl-CoA dehydrogenase family. Homodimer. In terms of tissue distribution, widely expressed, with highest levels in liver and kidney.

Its subcellular location is the cytoplasm. It catalyses the reaction L-gulonate + NAD(+) = 3-dehydro-L-gulonate + NADH + H(+). With respect to regulation, inhibited by malonate. Has high L-gulonate 3-dehydrogenase activity. It also exhibits low dehydrogenase activity toward L-3-hydroxybutyrate (HBA) and L-threonate. The sequence is that of Lambda-crystallin homolog (CRYL1) from Homo sapiens (Human).